Here is a 264-residue protein sequence, read N- to C-terminus: MNQVTESAVQFDVVTLFPEMFRALTDWGITSRAVKQERFGLRTWNPRDFTTDNYRTVDDRPYGGGPGMVMLAKPLEAAIGAAKAAQAEQGVASTRVVMMSPQGAPFTHERAVRMAQEPGVIVLCGRYEAIDQRLLDRCVDEEISLGDFVLSGGELPAMAMMDAVVRLLPGVLNDAQSAVQDSFVDGLLDCPHYTRPEEYEGMRVPDVLLGGHHAEIERWRRQEALKNTLRKRPDLIVRARREKLLSRADEAWLANLAREAKNAS.

Residues Gly-125 and 145–150 (LGDFVL) each bind S-adenosyl-L-methionine.

The protein belongs to the RNA methyltransferase TrmD family. As to quaternary structure, homodimer.

It is found in the cytoplasm. It carries out the reaction guanosine(37) in tRNA + S-adenosyl-L-methionine = N(1)-methylguanosine(37) in tRNA + S-adenosyl-L-homocysteine + H(+). Functionally, specifically methylates guanosine-37 in various tRNAs. In Burkholderia ambifaria (strain ATCC BAA-244 / DSM 16087 / CCUG 44356 / LMG 19182 / AMMD) (Burkholderia cepacia (strain AMMD)), this protein is tRNA (guanine-N(1)-)-methyltransferase.